Here is a 153-residue protein sequence, read N- to C-terminus: Myosin regulatory light chain (153 aa).

Position 1 is a blocked amino end (Ala) (Ala1). EF-hand domains lie at 15 to 50 and 81 to 116; these read KQIQ…LGRT and DSEE…MGNN. Residues Asp28, Asp30, Asp32, and Asp39 each contribute to the Ca(2+) site.

Its function is as follows. In molluscan muscle, calcium regulation is associated with myosin rather than with actin. Muscle myosin contains two types of light chains: the catalytic light chain, essential for ATPase activity, and the regulatory light chain, a calcium-binding protein responsible for Ca(2+) dependent binding and Ca(2+) dependent Mg-ATPase activity. This is Myosin regulatory light chain from Patinopecten sp. (Scallop).